Reading from the N-terminus, the 186-residue chain is Alpha/beta-gliadin clone PTO-A10 (186 aa).

Residues 1 to 20 (PQPQPQYSQPQQPISQQQQQ) form a disordered region.

Belongs to the gliadin/glutenin family. In terms of processing, substrate of transglutaminase.

Functionally, gliadin is the major seed storage protein in wheat. This is Alpha/beta-gliadin clone PTO-A10 from Triticum aestivum (Wheat).